The sequence spans 139 residues: Large ribosomal subunit protein uL16 (139 aa).

It belongs to the universal ribosomal protein uL16 family. Part of the 50S ribosomal subunit.

In terms of biological role, binds 23S rRNA and is also seen to make contacts with the A and possibly P site tRNAs. This chain is Large ribosomal subunit protein uL16, found in Treponema pallidum (strain Nichols).